A 179-amino-acid polypeptide reads, in one-letter code: Large ribosomal subunit protein uL6 (179 aa).

It belongs to the universal ribosomal protein uL6 family. In terms of assembly, part of the 50S ribosomal subunit.

This protein binds to the 23S rRNA, and is important in its secondary structure. It is located near the subunit interface in the base of the L7/L12 stalk, and near the tRNA binding site of the peptidyltransferase center. The chain is Large ribosomal subunit protein uL6 from Pelodictyon phaeoclathratiforme (strain DSM 5477 / BU-1).